The primary structure comprises 465 residues: MLPLVALVGRPNVGKSTIFNALTRTRDALVHDQPGVTRDRNYGVCRLDEQQPFIVVDTGGIAGDEDGLAGATARQARAAAGEADLVLFVVDGREGESSLDDEILAWLRKLARPTVLVINKIDGTDEETVRSEFARYGFSDVVALSAAHRQGIDELLEEVGARLPEEGSGELLDNDPARVRIAFVGRPNVGKSTLVNRLLGEERMIASEVPGTTRDSIAVDLERDGRQYRLIDTAGLRRRGKVEEAVEKFSAFKTLQAIERCQVAVLMLDATEGVTDQDATILGAILDAGRALVVAINKWDGQSDYQRAQAEDLLSRKLGFVSWAEAVRISALHGSGMRELFQAIHRAHASATHEFSTSEVNQALEIAYETNPPPSIRGHVSKLRYVHPGGANPPTFIVHGTRLKVLPESYKRYLENFFRKRFKLVGTPVCFIFREGANPYEGKKNPLSDRQVARKRRLMRHVKGK.

2 EngA-type G domains span residues 3–167 (PLVA…PEEG) and 179–352 (VRIA…ASAT). GTP contacts are provided by residues 9 to 16 (GRPNVGKS), 57 to 61 (DTGGI), 119 to 122 (NKID), 185 to 192 (GRPNVGKS), 232 to 236 (DTAGL), and 297 to 300 (NKWD). The region spanning 353 to 437 (HEFSTSEVNQ…PVCFIFREGA (85 aa)) is the KH-like domain.

Belongs to the TRAFAC class TrmE-Era-EngA-EngB-Septin-like GTPase superfamily. EngA (Der) GTPase family. As to quaternary structure, associates with the 50S ribosomal subunit.

Its function is as follows. GTPase that plays an essential role in the late steps of ribosome biogenesis. This is GTPase Der from Xanthomonas oryzae pv. oryzae (strain MAFF 311018).